A 485-amino-acid chain; its full sequence is Glutathione gamma-glutamylcysteinyltransferase 1 (485 aa).

Residues 1–221 (MAMASLYRRS…GFMLISRPHR (221 aa)) enclose the Peptidase C83 domain. Catalysis depends on residues cysteine 56, histidine 162, and aspartate 180.

This sequence belongs to the phytochelatin synthase family. Expressed in roots and shoots.

The catalysed reaction is [Glu(-Cys)](n)-Gly + glutathione + H(+) = [Glu(-Cys)](n+1)-Gly + glycine. Its activity is regulated as follows. Requires cadmium for activity. Also activated in vitro or in heterologous system by Ag(+), Hg(+), Zn(2+), Cu(2+), Fe(2+) or Fe(3+) ions, but not by Co(2+) or Ni(2+) ions. Functionally, involved in the synthesis of phytochelatins (PC) and homophytochelatins (hPC), the heavy-metal-binding peptides of plants. Also involved in glutathione-conjugates degradation. This is Glutathione gamma-glutamylcysteinyltransferase 1 (PCS1) from Arabidopsis thaliana (Mouse-ear cress).